The following is a 179-amino-acid chain: Large ribosomal subunit protein uL5 (179 aa).

It belongs to the universal ribosomal protein uL5 family. As to quaternary structure, part of the 50S ribosomal subunit; part of the 5S rRNA/L5/L18/L25 subcomplex. Contacts the 5S rRNA and the P site tRNA. Forms a bridge to the 30S subunit in the 70S ribosome.

Its function is as follows. This is one of the proteins that bind and probably mediate the attachment of the 5S RNA into the large ribosomal subunit, where it forms part of the central protuberance. In the 70S ribosome it contacts protein S13 of the 30S subunit (bridge B1b), connecting the 2 subunits; this bridge is implicated in subunit movement. Contacts the P site tRNA; the 5S rRNA and some of its associated proteins might help stabilize positioning of ribosome-bound tRNAs. The sequence is that of Large ribosomal subunit protein uL5 from Lachnoclostridium phytofermentans (strain ATCC 700394 / DSM 18823 / ISDg) (Clostridium phytofermentans).